Reading from the N-terminus, the 127-residue chain is Mediator of RNA polymerase II transcription subunit 31 (127 aa).

This sequence belongs to the Mediator complex subunit 31 family. Component of the Mediator complex, which is composed of at least 21 subunits that form three structurally distinct submodules. The Mediator head module contains MED6, MED8, MED11, SRB4/MED17, SRB5/MED18, ROX3/MED19, SRB2/MED20 and SRB6/MED22, the middle module contains MED1, MED4, NUT1/MED5, MED7, CSE2/MED9, NUT2/MED10, SRB7/MED21 and SOH1/MED31, and the tail module contains MED2, PGD1/MED3, RGR1/MED14, GAL11/MED15 and SIN4/MED16. The head and the middle modules interact directly with RNA polymerase II, whereas the elongated tail module interacts with gene-specific regulatory proteins.

The protein localises to the nucleus. In terms of biological role, component of the Mediator complex, a coactivator involved in the regulated transcription of nearly all RNA polymerase II-dependent genes. Mediator functions as a bridge to convey information from gene-specific regulatory proteins to the basal RNA polymerase II transcription machinery. The Mediator complex, having a compact conformation in its free form, is recruited to promoters by direct interactions with regulatory proteins and serves for the assembly of a functional preinitiation complex with RNA polymerase II and the general transcription factors. The Mediator complex unfolds to an extended conformation and partially surrounds RNA polymerase II, specifically interacting with the unphosphorylated form of the C-terminal domain (CTD) of RNA polymerase II. The Mediator complex dissociates from the RNA polymerase II holoenzyme and stays at the promoter when transcriptional elongation begins. This Saccharomyces cerevisiae (strain ATCC 204508 / S288c) (Baker's yeast) protein is Mediator of RNA polymerase II transcription subunit 31 (SOH1).